The primary structure comprises 181 residues: Inner membrane-spanning protein YciB (181 aa).

5 helical membrane passes run 10–30 (LVIF…GALI), 50–70 (MHLI…VFHD), 72–92 (AFIK…LGIS), 118–138 (ITWY…YVAF), and 148–168 (FKVF…VFYL).

The protein belongs to the YciB family.

Its subcellular location is the cell inner membrane. In terms of biological role, plays a role in cell envelope biogenesis, maintenance of cell envelope integrity and membrane homeostasis. The sequence is that of Inner membrane-spanning protein YciB from Shewanella putrefaciens (strain CN-32 / ATCC BAA-453).